A 114-amino-acid polypeptide reads, in one-letter code: Gas vesicle protein J1 (114 aa).

Residues 13 to 22 (LAEMLEMLLD) are alpha helix 1. Beta-strand stretches follow at residues 25 to 35 (VVVNADIAVSV) and 40 to 50 (LLGIELRAAIA). The short motif at 46-50 (RAAIA) is the Conserved in GvpM1/2 but not GvpA element. Alpha helix regions lie at residues 52–72 (FETA…ERVE), 78–87 (SPDQSDPASE), and 95–105 (TNPLSDDSTPT). Residues 63-114 (PTGTDMERVESAANISPDQSDPASETQSETESTNPLSDDSTPTASTSAEETK) are disordered. Residues 75-98 (ANISPDQSDPASETQSETESTNPL) are compositionally biased toward polar residues. Residues 99 to 114 (SDDSTPTASTSAEETK) show a composition bias toward low complexity.

Belongs to the gas vesicle GvpA family. In terms of assembly, gvpF to GvpM interact with each other in vitro, and may form multi-subunit complex(es). Interacts with GvpA1.

It localises to the gas vesicle. In terms of biological role, proteins GvpF to GvpM might be involved in nucleating gas vesicle formation. Mutagenesis of residues 13-61 shows that almost none of them can be substituted and still make gas vesicles. A minor component of the gas vesicle. Gas vesicles are hollow, gas filled proteinaceous nanostructures found in several microbial planktonic microorganisms. They allow positioning of halobacteria at the optimal depth for growth in the poorly aerated, shallow brine pools of their habitat. Functionally, expression of a 9.5 kb p-vac DNA fragment containing 2 divergently transcribed regions (gvpD-gvpE-gvpF-gvpG-gvpH-gvpI-gvpJ-gvpK-gvpL-gvpM and gvpA-gvpC-gvpN-gvpO) allows H.volcanii to produce gas vesicles. All site-directed mutagenesis is tested in H.volcanii. A minimal gas vesicle can be made in H.volcanii by gvpA1-gvpO1 plus gvpF1-gvpG1-gvpJ1-gvpK1-gvpL1-gvpM1; lack of enough GvpJ1 prevents formation. A similar region restores gas vesicle production in H.halobium without the p-vac locus, but it still has the c-vac locus. This is Gas vesicle protein J1 (gvpJ11) from Halobacterium salinarum (strain ATCC 700922 / JCM 11081 / NRC-1) (Halobacterium halobium).